Here is a 303-residue protein sequence, read N- to C-terminus: Guanosine-inosine kinase (303 aa).

This sequence belongs to the carbohydrate kinase PfkB family. Homodimer. It depends on Mg(2+) as a cofactor.

It catalyses the reaction guanosine + ATP = GMP + ADP + H(+). The catalysed reaction is inosine + ATP = IMP + ADP + H(+). The protein operates within purine metabolism; IMP biosynthesis via salvage pathway; IMP from inosine: step 1/1. It participates in purine metabolism; GMP biosynthesis via salvage pathway. Its activity is regulated as follows. Kinase activity is stimulated by pyrimidine nucleotides, especially CMP and CTP, and inhibited by AMP, ADP and GMP. Activity is stimulated by potassium or ammonium ions. Catalyzes the phosphorylation of guanosine and inosine to GMP and IMP, respectively. Can also use deoxyguanosine. Shows a strong preference for guanosine. dATP, GTP and dGTP can serve as phosphate donors. The polypeptide is Guanosine-inosine kinase (Exiguobacterium acetylicum (Brevibacterium acetylicum)).